We begin with the raw amino-acid sequence, 561 residues long: MAASAKRKQEEKHLKMLRDMTGLPHNRKCFDCDQRGPTYVNMTVGSFVCTSCSGSLRGLNPPHRVKSISMTTFTQQEIEFLQKHGNEVCKQIWLGLFDDRSSAIPDFRDPQKVKEFLQEKYEKKRWYVPPEQAKVVASVHASISGSSASSTSSTPEVKPLKSLLGESAPALHLNKGTPTQSPVVGRSQGQQQEKKQFDLLSDLGSDIFAAPAPQSTATANFANFAHFNSHAAQNSANAEFANFDAFGQSSGSSNFGGFPTASHSPFQPQTTGGSAGSVNANFAHFDNFPKSSSADFGSFSTSQSHQTASTVSKVSTNKAGLQTADKYAALANLDNIFSAGQGGDQGSGFGTTGKAPVGSVVSVPSHSSASSDKYAALAELDSVFSSAATSNNAYTSTSNASSSVFGTVPVGASPQTQPASSGPAPFGATPSTNPFVAATGPSAASSTNPFQTNARGATAATFGTASMSMPAGFGTPAQYSLPTSFSGSFQQPPFPAQAAFPQQTAFSQQPNGAGFATFGQTKPVVTPFGQVAAAGVSSNPFMTGAPTGQFPTGSSSTNPFL.

The 125-residue stretch at 11 to 135 (EKHLKMLRDM…WYVPPEQAKV (125 aa)) folds into the Arf-GAP domain. A C4-type zinc finger spans residues 29–52 (CFDCDQRGPTYVNMTVGSFVCTSC). At Ser167 the chain carries Phosphoserine. The segment at 171 to 193 (LHLNKGTPTQSPVVGRSQGQQQE) is disordered. Positions 176–191 (GTPTQSPVVGRSQGQQ) are enriched in polar residues. At Thr177 the chain carries Phosphothreonine. Phosphoserine is present on residues Ser181 and Ser362. Residue Ser367 is glycosylated (O-linked (GlcNAc) serine). Residues 409-451 (PVGASPQTQPASSGPAPFGATPSTNPFVAATGPSAASSTNPFQ) are disordered. Residues 442 to 451 (SAASSTNPFQ) show a composition bias toward polar residues.

Interacts with EPS15R and EPS15. Interacts with FCHO1. Post-translationally, O-glycosylated.

Its subcellular location is the nucleus. It is found in the cytoplasmic vesicle. Required for vesicle docking or fusion during acrosome biogenesis. May play a role in RNA trafficking or localization. The protein is Arf-GAP domain and FG repeat-containing protein 1 (Agfg1) of Rattus norvegicus (Rat).